A 78-amino-acid polypeptide reads, in one-letter code: Putative membrane protein insertion efficiency factor (78 aa).

Belongs to the UPF0161 family.

The protein localises to the cell membrane. In terms of biological role, could be involved in insertion of integral membrane proteins into the membrane. This Bacillus anthracis (strain A0248) protein is Putative membrane protein insertion efficiency factor.